A 477-amino-acid polypeptide reads, in one-letter code: Aspartyl/glutamyl-tRNA(Asn/Gln) amidotransferase subunit B (477 aa).

It belongs to the GatB/GatE family. GatB subfamily. As to quaternary structure, heterotrimer of A, B and C subunits.

It catalyses the reaction L-glutamyl-tRNA(Gln) + L-glutamine + ATP + H2O = L-glutaminyl-tRNA(Gln) + L-glutamate + ADP + phosphate + H(+). The catalysed reaction is L-aspartyl-tRNA(Asn) + L-glutamine + ATP + H2O = L-asparaginyl-tRNA(Asn) + L-glutamate + ADP + phosphate + 2 H(+). Its function is as follows. Allows the formation of correctly charged Asn-tRNA(Asn) or Gln-tRNA(Gln) through the transamidation of misacylated Asp-tRNA(Asn) or Glu-tRNA(Gln) in organisms which lack either or both of asparaginyl-tRNA or glutaminyl-tRNA synthetases. The reaction takes place in the presence of glutamine and ATP through an activated phospho-Asp-tRNA(Asn) or phospho-Glu-tRNA(Gln). The polypeptide is Aspartyl/glutamyl-tRNA(Asn/Gln) amidotransferase subunit B (Ureaplasma parvum serovar 3 (strain ATCC 27815 / 27 / NCTC 11736)).